A 147-amino-acid chain; its full sequence is Hemoglobin subunit delta (147 aa).

In terms of domain architecture, Globin spans 3–147 (HLTGEEKAAV…VANALAHKYH (145 aa)). Residues H64 and H93 each coordinate heme b.

It belongs to the globin family. Heterotetramer of two delta chains and two alpha chains. In terms of tissue distribution, red blood cells.

This is Hemoglobin subunit delta (HBD) from Ailuropoda melanoleuca (Giant panda).